Reading from the N-terminus, the 325-residue chain is Phenylalanine--tRNA ligase alpha subunit (325 aa).

Glu-251 contacts Mg(2+).

It belongs to the class-II aminoacyl-tRNA synthetase family. Phe-tRNA synthetase alpha subunit type 1 subfamily. As to quaternary structure, tetramer of two alpha and two beta subunits. It depends on Mg(2+) as a cofactor.

Its subcellular location is the cytoplasm. The enzyme catalyses tRNA(Phe) + L-phenylalanine + ATP = L-phenylalanyl-tRNA(Phe) + AMP + diphosphate + H(+). The protein is Phenylalanine--tRNA ligase alpha subunit (pheS) of Thermotoga maritima (strain ATCC 43589 / DSM 3109 / JCM 10099 / NBRC 100826 / MSB8).